The chain runs to 923 residues: MNRTPIRRCKSAEIEEDPFSPIPKFSRLRTPRTSREYVCPLKSTSPQSPSSSTENEPPPVSVTSPPARKRALEESTVTPIQQKIGPPVLKRSSLSKLADGFRTAAYLNNESENDDDPFGLSFRNEQVLMSKCAPAPEKRPETLTLDPSKCLPERDMEMYRKIKKLDKFYDWQQECLSDKRLLDGENCILSLPTGAGKTLIAEVLMLREAIVRKRNAILVLPYVAIVQEKISALAPFEDAFGINIEEYASNKGRFPPIKRRKRVSVYVATIEKANMLINSLITQGQLDRVGMVVVDELHMIGDGGRGAILEQLLAKFLYKGTGQIVGMSATLPNIDDLKFALRAFVYSTNFRPVELTEFVKIGQTMHQVSENGDLNPAGDLPTNNLKSTDPDGICQLLAKLIPKNSAVIFCPNKKNCENVAVLIAKTLPAHIRQAKRAESDAFLQSYLSDNDDERMDAVLKQCILSGVAYHHSGLTQDERKCVEAAFMEGLIYVVCATSTLAAGVNLPVRRVIIKAPMVGRERLGKAQYLQMAGRAGRAGFDTKGDCITIIKAGEEERWFREMLKSDIPRCMSSLSSEESMGSFILDCVVLKLAENIEEIMTAVRYSLFYAQESPENIRKLVESSVKRLEEHYFITIEPLEQDVASEPSAQASSIPRVPGKISPSDLGNAVFNAGFDPDEATRLHADLVSSLNQGVIFASHFHLLFIITPYEQVCNINWDLFLLMYNALPSSERKLLAECGLEEKFILEAIITRVDLTAGTPRMRLYIALMLQKIWNHEPMYTVAERFGVEKGWLQATLQSSISQAASIAKFSEKITTMWPLRKLLPELVQRLSEAAQPELLPLMTVDGIKKARAAILFKAGYKTVGMIARANPLKLVQELGTIRMAQANSIIASARMVLRDQVDEKMEELDVWGVATDSFNYF.

The disordered stretch occupies residues 1 to 84 (MNRTPIRRCK…STVTPIQQKI (84 aa)). A compositionally biased stretch (low complexity) spans 43 to 55 (STSPQSPSSSTEN). In terms of domain architecture, Helicase ATP-binding spans 178 to 349 (DKRLLDGENC…ALRAFVYSTN (172 aa)). 191–198 (LPTGAGKT) is a binding site for ATP. The DEAH box motif lies at 295 to 298 (DELH). Residues 392–596 (GICQLLAKLI…CVVLKLAENI (205 aa)) form the Helicase C-terminal domain.

It belongs to the helicase family. SKI2 subfamily.

It localises to the nucleus. The protein resides in the chromosome. It catalyses the reaction Couples ATP hydrolysis with the unwinding of duplex DNA by translocating in the 3'-5' direction.. It carries out the reaction ATP + H2O = ADP + phosphate + H(+). Its function is as follows. Single-stranded 3'-5' DNA helicase that plays a key role in homology-driven double-strand break (DSB) repair. Involved in different DSB repair mechanisms that are guided by annealing of extensive stretches of complementary bases at break ends, such as microhomology-mediated end-joining (MMEJ), single-strand annealing (SSA) or synthesis-dependent strand annealing (SDSA). The chain is Helicase POLQ-like from Caenorhabditis elegans.